The chain runs to 450 residues: Methionine aminopeptidase 2-2 (450 aa).

Composition is skewed to basic and acidic residues over residues 1-10 (MGAKISEDHP) and 30-39 (RGAHLSRDGD). The tract at residues 1–100 (MGAKISEDHP…PPRVPLSELF (100 aa)) is disordered. Positions 47–56 (GDDDDDDDEG) are enriched in acidic residues. Residues 69–86 (KKKKKKRKPKKKKAKKAT) are compositionally biased toward basic residues. Residue His-211 coordinates substrate. Residues Asp-232, Asp-243, and His-302 each coordinate a divalent metal cation. His-310 lines the substrate pocket. Positions 335 and 431 each coordinate a divalent metal cation.

Belongs to the peptidase M24A family. Methionine aminopeptidase eukaryotic type 2 subfamily. Co(2+) serves as cofactor. Requires Zn(2+) as cofactor. It depends on Mn(2+) as a cofactor. The cofactor is Fe(2+).

It localises to the cytoplasm. It carries out the reaction Release of N-terminal amino acids, preferentially methionine, from peptides and arylamides.. In terms of biological role, cotranslationally removes the N-terminal methionine from nascent proteins. The N-terminal methionine is often cleaved when the second residue in the primary sequence is small and uncharged (Met-Ala-, Cys, Gly, Pro, Ser, Thr, or Val). The polypeptide is Methionine aminopeptidase 2-2 (Fusarium vanettenii (strain ATCC MYA-4622 / CBS 123669 / FGSC 9596 / NRRL 45880 / 77-13-4) (Fusarium solani subsp. pisi)).